Reading from the N-terminus, the 225-residue chain is NAD(P)H-quinone oxidoreductase subunit K, chloroplastic (225 aa).

Cys-43, Cys-44, Cys-108, and Cys-139 together coordinate [4Fe-4S] cluster.

Belongs to the complex I 20 kDa subunit family. As to quaternary structure, NDH is composed of at least 16 different subunits, 5 of which are encoded in the nucleus. [4Fe-4S] cluster serves as cofactor.

Its subcellular location is the plastid. The protein localises to the chloroplast thylakoid membrane. It catalyses the reaction a plastoquinone + NADH + (n+1) H(+)(in) = a plastoquinol + NAD(+) + n H(+)(out). It carries out the reaction a plastoquinone + NADPH + (n+1) H(+)(in) = a plastoquinol + NADP(+) + n H(+)(out). In terms of biological role, NDH shuttles electrons from NAD(P)H:plastoquinone, via FMN and iron-sulfur (Fe-S) centers, to quinones in the photosynthetic chain and possibly in a chloroplast respiratory chain. The immediate electron acceptor for the enzyme in this species is believed to be plastoquinone. Couples the redox reaction to proton translocation, and thus conserves the redox energy in a proton gradient. The sequence is that of NAD(P)H-quinone oxidoreductase subunit K, chloroplastic from Populus alba (White poplar).